The following is a 264-amino-acid chain: Tryptophan synthase alpha chain (264 aa).

Active-site proton acceptor residues include glutamate 49 and aspartate 60.

It belongs to the TrpA family. As to quaternary structure, tetramer of two alpha and two beta chains.

It carries out the reaction (1S,2R)-1-C-(indol-3-yl)glycerol 3-phosphate + L-serine = D-glyceraldehyde 3-phosphate + L-tryptophan + H2O. The protein operates within amino-acid biosynthesis; L-tryptophan biosynthesis; L-tryptophan from chorismate: step 5/5. Functionally, the alpha subunit is responsible for the aldol cleavage of indoleglycerol phosphate to indole and glyceraldehyde 3-phosphate. In Microcystis aeruginosa (strain NIES-843 / IAM M-2473), this protein is Tryptophan synthase alpha chain.